The following is a 548-amino-acid chain: Chaperonin GroEL (548 aa).

Residues 30–33 (TLGP), Lys51, 87–91 (DGTTT), Gly415, and Asp496 contribute to the ATP site.

The protein belongs to the chaperonin (HSP60) family. Forms a cylinder of 14 subunits composed of two heptameric rings stacked back-to-back. Interacts with the co-chaperonin GroES.

It is found in the cytoplasm. It carries out the reaction ATP + H2O + a folded polypeptide = ADP + phosphate + an unfolded polypeptide.. In terms of biological role, together with its co-chaperonin GroES, plays an essential role in assisting protein folding. The GroEL-GroES system forms a nano-cage that allows encapsulation of the non-native substrate proteins and provides a physical environment optimized to promote and accelerate protein folding. The protein is Chaperonin GroEL of Haemophilus influenzae (strain ATCC 51907 / DSM 11121 / KW20 / Rd).